The sequence spans 182 residues: Allergen Bla g 4 (182 aa).

Positions 1 to 12 (AVLALCATDTLA) are cleaved as a signal peptide. N-linked (GlcNAc...) asparagine glycosylation is present at N72.

This sequence belongs to the calycin superfamily. Triabin family.

The protein resides in the secreted. Its function is as follows. Probable ligand-binding protein. This is Allergen Bla g 4 from Blattella germanica (German cockroach).